Here is a 91-residue protein sequence, read N- to C-terminus: Succinate dehydrogenase assembly factor 1A, mitochondrial (91 aa).

This sequence belongs to the complex I LYR family. SDHAF1 subfamily. In terms of assembly, interacts with the iron-sulfur protein subunit within the SDH catalytic dimer.

Its subcellular location is the mitochondrion matrix. Functionally, plays an essential role in the assembly of succinate dehydrogenase (SDH), an enzyme complex (also referred to as respiratory complex II) that is a component of both the tricarboxylic acid (TCA) cycle and the mitochondrial electron transport chain, and which couples the oxidation of succinate to fumarate with the reduction of ubiquinone (coenzyme Q) to ubiquinol. Promotes maturation of the iron-sulfur protein subunit of the SDH catalytic dimer, protecting it from the deleterious effects of oxidants. May act together with SDHAF3. In Dictyostelium discoideum (Social amoeba), this protein is Succinate dehydrogenase assembly factor 1A, mitochondrial.